Consider the following 137-residue polypeptide: Nucleoside diphosphate kinase (137 aa).

ATP is bound by residues Lys-9, Phe-57, Arg-85, Thr-91, Arg-102, and Asn-112. His-115 (pros-phosphohistidine intermediate) is an active-site residue.

This sequence belongs to the NDK family. Homotetramer. Mg(2+) is required as a cofactor.

It localises to the cytoplasm. It carries out the reaction a 2'-deoxyribonucleoside 5'-diphosphate + ATP = a 2'-deoxyribonucleoside 5'-triphosphate + ADP. The catalysed reaction is a ribonucleoside 5'-diphosphate + ATP = a ribonucleoside 5'-triphosphate + ADP. Functionally, major role in the synthesis of nucleoside triphosphates other than ATP. The ATP gamma phosphate is transferred to the NDP beta phosphate via a ping-pong mechanism, using a phosphorylated active-site intermediate. The sequence is that of Nucleoside diphosphate kinase from Syntrophotalea carbinolica (strain DSM 2380 / NBRC 103641 / GraBd1) (Pelobacter carbinolicus).